The chain runs to 213 residues: Protein-L-isoaspartate O-methyltransferase (213 aa).

The active site involves Ser64.

Belongs to the methyltransferase superfamily. L-isoaspartyl/D-aspartyl protein methyltransferase family.

It is found in the cytoplasm. The catalysed reaction is [protein]-L-isoaspartate + S-adenosyl-L-methionine = [protein]-L-isoaspartate alpha-methyl ester + S-adenosyl-L-homocysteine. In terms of biological role, catalyzes the methyl esterification of L-isoaspartyl residues in peptides and proteins that result from spontaneous decomposition of normal L-aspartyl and L-asparaginyl residues. It plays a role in the repair and/or degradation of damaged proteins. The polypeptide is Protein-L-isoaspartate O-methyltransferase (Christiangramia forsetii (strain DSM 17595 / CGMCC 1.15422 / KT0803) (Gramella forsetii)).